We begin with the raw amino-acid sequence, 462 residues long: Mitochondrial-processing peptidase subunit beta (462 aa).

Residues 1–20 (MFSRTASKFRNTRRLLSTIS) constitute a mitochondrion transit peptide. His-70 contacts Zn(2+). The active-site Proton acceptor is the Glu-73. The Zn(2+) site is built by His-74 and Glu-150. Phosphoserine is present on Ser-243.

It belongs to the peptidase M16 family. As to quaternary structure, heterodimer of MAS2 (alpha) and MAS1 (beta) subunits, forming the mitochondrial processing protease (MPP) in which MAS2 is involved in substrate recognition and binding and MAS1 is the catalytic subunit. It depends on Zn(2+) as a cofactor.

Its subcellular location is the mitochondrion matrix. The enzyme catalyses Release of N-terminal transit peptides from precursor proteins imported into the mitochondrion, typically with Arg in position P2.. Binding to MAS2 is required for catalytic activity. Inhibited by high levels (&gt; 1uM) of zinc. Inhibited by metal chelators ethylenediaminetetraacetic acid (EDTA) and O-phenanthroline. Its function is as follows. Catalytic subunit of the essential mitochondrial processing protease (MPP), which cleaves the mitochondrial sequence off newly imported precursors proteins. Preferentially, cleaves after an arginine at position P2. This Saccharomyces cerevisiae (strain ATCC 204508 / S288c) (Baker's yeast) protein is Mitochondrial-processing peptidase subunit beta.